Reading from the N-terminus, the 96-residue chain is MNVLKEVYATIEKRIEEKPEGSYVAKLTTDDKKTAVNKICEKVGEEAAEVIIAAKDNDKAEIIYESADLIFHTMVLLAKSGITYEELSEEFKKRMK.

This sequence belongs to the PRA-PH family.

It localises to the cytoplasm. It carries out the reaction 1-(5-phospho-beta-D-ribosyl)-ATP + H2O = 1-(5-phospho-beta-D-ribosyl)-5'-AMP + diphosphate + H(+). It participates in amino-acid biosynthesis; L-histidine biosynthesis; L-histidine from 5-phospho-alpha-D-ribose 1-diphosphate: step 2/9. This is Phosphoribosyl-ATP pyrophosphatase from Methanococcus maripaludis (strain DSM 14266 / JCM 13030 / NBRC 101832 / S2 / LL).